A 753-amino-acid chain; its full sequence is Protein transport protein SEC23-1 (753 aa).

Zn(2+) is bound by residues Cys-56, Cys-61, Cys-80, and Cys-83.

Belongs to the SEC23/SEC24 family. SEC23 subfamily. The COPII coat is composed of at least 5 proteins: the SEC23/24 complex, the SEC13/31 complex, and the protein SAR1.

Its subcellular location is the cytoplasm. The protein resides in the cytoplasmic vesicle. It localises to the COPII-coated vesicle membrane. The protein localises to the endoplasmic reticulum membrane. It is found in the golgi apparatus membrane. Functionally, component of the coat protein complex II (COPII) which promotes the formation of transport vesicles from the endoplasmic reticulum (ER). The coat has two main functions, the physical deformation of the endoplasmic reticulum membrane into vesicles and the selection of cargo molecules. The polypeptide is Protein transport protein SEC23-1 (SEC231) (Candida glabrata (strain ATCC 2001 / BCRC 20586 / JCM 3761 / NBRC 0622 / NRRL Y-65 / CBS 138) (Yeast)).